The following is a 421-amino-acid chain: UDP-N-acetylglucosamine 1-carboxyvinyltransferase (421 aa).

Position 22 to 23 (22 to 23 (KN)) interacts with phosphoenolpyruvate. Residue Arg-93 coordinates UDP-N-acetyl-alpha-D-glucosamine. Catalysis depends on Cys-117, which acts as the Proton donor. A 2-(S-cysteinyl)pyruvic acid O-phosphothioketal modification is found at Cys-117. UDP-N-acetyl-alpha-D-glucosamine contacts are provided by residues 122-126 (RPVDL), Asp-308, and Val-330.

It belongs to the EPSP synthase family. MurA subfamily.

Its subcellular location is the cytoplasm. The enzyme catalyses phosphoenolpyruvate + UDP-N-acetyl-alpha-D-glucosamine = UDP-N-acetyl-3-O-(1-carboxyvinyl)-alpha-D-glucosamine + phosphate. It participates in cell wall biogenesis; peptidoglycan biosynthesis. Functionally, cell wall formation. Adds enolpyruvyl to UDP-N-acetylglucosamine. In Pseudomonas paraeruginosa (strain DSM 24068 / PA7) (Pseudomonas aeruginosa (strain PA7)), this protein is UDP-N-acetylglucosamine 1-carboxyvinyltransferase.